A 298-amino-acid chain; its full sequence is GTP cyclohydrolase FolE2 (298 aa).

The protein belongs to the GTP cyclohydrolase IV family.

The catalysed reaction is GTP + H2O = 7,8-dihydroneopterin 3'-triphosphate + formate + H(+). The protein operates within cofactor biosynthesis; 7,8-dihydroneopterin triphosphate biosynthesis; 7,8-dihydroneopterin triphosphate from GTP: step 1/1. Functionally, converts GTP to 7,8-dihydroneopterin triphosphate. This chain is GTP cyclohydrolase FolE2, found in Azotobacter vinelandii (strain DJ / ATCC BAA-1303).